We begin with the raw amino-acid sequence, 281 residues long: Undecaprenyl-diphosphatase (281 aa).

7 helical membrane passes run 4-24 (ILLL…FLPI), 46-63 (AFEV…CWEF), 83-103 (FVLN…LFGK), 108-128 (VLFS…IIFW), 187-207 (AVAT…ATAY), 222-242 (EFTL…FVCV), and 257-277 (FAWY…TGLI).

The protein belongs to the UppP family.

The protein resides in the cell inner membrane. The catalysed reaction is di-trans,octa-cis-undecaprenyl diphosphate + H2O = di-trans,octa-cis-undecaprenyl phosphate + phosphate + H(+). Functionally, catalyzes the dephosphorylation of undecaprenyl diphosphate (UPP). Confers resistance to bacitracin. This chain is Undecaprenyl-diphosphatase, found in Polynucleobacter necessarius subsp. necessarius (strain STIR1).